The primary structure comprises 72 residues: Translation initiation factor IF-1 (72 aa).

Residues 1–72 form the S1-like domain; it reads MAKEDSIEMQ…SKGRIVFRSR (72 aa).

It belongs to the IF-1 family. As to quaternary structure, component of the 30S ribosomal translation pre-initiation complex which assembles on the 30S ribosome in the order IF-2 and IF-3, IF-1 and N-formylmethionyl-tRNA(fMet); mRNA recruitment can occur at any time during PIC assembly.

It localises to the cytoplasm. Its function is as follows. One of the essential components for the initiation of protein synthesis. Stabilizes the binding of IF-2 and IF-3 on the 30S subunit to which N-formylmethionyl-tRNA(fMet) subsequently binds. Helps modulate mRNA selection, yielding the 30S pre-initiation complex (PIC). Upon addition of the 50S ribosomal subunit IF-1, IF-2 and IF-3 are released leaving the mature 70S translation initiation complex. This Aeromonas hydrophila subsp. hydrophila (strain ATCC 7966 / DSM 30187 / BCRC 13018 / CCUG 14551 / JCM 1027 / KCTC 2358 / NCIMB 9240 / NCTC 8049) protein is Translation initiation factor IF-1.